The sequence spans 90 residues: MSEKDKMITRRDALRNIAVVVGSVATTTMMGVGVADAGSMPKAAVQYQDTPKGKDHCSVCAQFIAPHSCKVVAGNISPNGWCVAFVPKSA.

The tat-type signal signal peptide spans 1-37; the sequence is MSEKDKMITRRDALRNIAVVVGSVATTTMMGVGVADA. Residues cysteine 57, cysteine 60, cysteine 69, and cysteine 82 each coordinate [4Fe-4S] cluster.

This sequence belongs to the high-potential iron-sulfur protein (HiPIP) family. In terms of assembly, homomultimer. Predicted to be exported by the Tat system. The position of the signal peptide cleavage has been experimentally proven.

The protein resides in the periplasm. Its function is as follows. Catalyzes the oxidation of Fe(2+) to Fe(3+) coupled to cytochrome c552 reduction. This chain is Iron oxidase (iro), found in Acidithiobacillus ferrooxidans (Thiobacillus ferrooxidans).